The sequence spans 2376 residues: Protein Ycf2 (2376 aa).

Disordered stretches follow at residues 173-194 (SSQLKGSSDQSRDHFDSIGTED), 226-256 (TEIESDRFSKGLSGSSSKSRLFTEGEKEMNN), and 952-1011 (KRKK…KRKE). Over residues 235–245 (KGLSGSSSKSR) the composition is skewed to low complexity. Basic and acidic residues-rich tracts occupy residues 246 to 255 (LFTEGEKEMN) and 960 to 1009 (KRKE…PEKR). 1441–1448 (GSIGSGRS) is a binding site for ATP. Disordered regions lie at residues 1515 to 1534 (YEDRDSDDYDEPGASDDYEP), 1860 to 2046 (LVGS…LRPK), and 2112 to 2230 (PAEE…DGFS). Residues 1866–2025 (TEEEVEGTEE…GEGTEDEEGE (160 aa)) show a composition bias toward acidic residues. Positions 2026–2038 (GTEKDSSQFDNDR) are enriched in basic and acidic residues. Composition is skewed to acidic residues over residues 2112-2129 (PAEEIPEEEDPLPEEALE) and 2136-2213 (GEEE…ENDS).

This sequence belongs to the Ycf2 family.

The protein resides in the plastid. The protein localises to the chloroplast stroma. Probable ATPase of unknown function. Its presence in a non-photosynthetic plant (Epifagus virginiana) and experiments in tobacco indicate that it has an essential function which is probably not related to photosynthesis. This chain is Protein Ycf2, found in Oenothera glazioviana (Large-flowered evening primrose).